The sequence spans 764 residues: Zygote defective protein 12 (764 aa).

Positions 1-20 (MLDLTNQESDSSENGNSKYA) are enriched in polar residues. Residues 1–33 (MLDLTNQESDSSENGNSKYADSTDGRGIGTSRR) are disordered. Positions 1–236 (MLDLTNQESD…ESSVITNGNG (236 aa)) are interaction with dli-1. A Calponin-homology (CH) domain is found at 43–169 (RKDLADLVFW…VSLAFIGKTQ (127 aa)). Coiled-coil stretches lie at residues 244–405 (LSAN…HVKT) and 436–692 (GLES…NRLI). The chain crosses the membrane as a helical span at residues 732 to 752 (ALPWRFGISSMLIIFMVWFFI).

It belongs to the hook family. As to quaternary structure, homodimer. Interacts with the dynein subunit dli-1 via its N-terminus. May interact with microtubules.

The protein resides in the nucleus membrane. The protein localises to the cytoplasm. It is found in the cytoskeleton. Its subcellular location is the microtubule organizing center. It localises to the centrosome. In terms of biological role, cytoskeletal linker protein, which is essential for attachment of the centrosome to the nucleus. Required for dynein localization to the nuclear envelope. This is Zygote defective protein 12 (zyg-12) from Caenorhabditis briggsae.